The primary structure comprises 530 residues: uncharacterized protein (530 aa).

The tract at residues 362–408 (NLTPKLNKTNEDIKSDSTSQPQGFPEGNRRVMENPETKVSKTDDEEM) is disordered. Residues 388–403 (GNRRVMENPETKVSKT) show a composition bias toward basic and acidic residues.

The protein belongs to the IIV-6 030L family.

This is an uncharacterized protein from Invertebrate iridescent virus 6 (IIV-6).